We begin with the raw amino-acid sequence, 101 residues long: Small ribosomal subunit protein uS14 (101 aa).

Residues 36 to 72 form a disordered region; sequence GTDESREAARAGIQRLPRDASPIRVRNRDGIDGRPRG. The span at 61-70 shows a compositional bias: basic and acidic residues; that stretch reads RNRDGIDGRP.

This sequence belongs to the universal ribosomal protein uS14 family. Part of the 30S ribosomal subunit. Contacts proteins S3 and S10.

Its function is as follows. Binds 16S rRNA, required for the assembly of 30S particles and may also be responsible for determining the conformation of the 16S rRNA at the A site. The sequence is that of Small ribosomal subunit protein uS14 from Clavibacter michiganensis subsp. michiganensis (strain NCPPB 382).